We begin with the raw amino-acid sequence, 450 residues long: Tubulin alpha chain (450 aa).

Glutamine 11 is a binding site for GTP. Lysine 40 carries the N6-acetyllysine modification. GTP is bound by residues glutamate 71, serine 140, glycine 144, threonine 145, threonine 179, asparagine 206, and asparagine 228. Glutamate 71 serves as a coordination point for Mg(2+). Glutamate 254 is an active-site residue.

The protein belongs to the tubulin family. As to quaternary structure, dimer of alpha and beta chains. A typical microtubule is a hollow water-filled tube with an outer diameter of 25 nm and an inner diameter of 15 nM. Alpha-beta heterodimers associate head-to-tail to form protofilaments running lengthwise along the microtubule wall with the beta-tubulin subunit facing the microtubule plus end conferring a structural polarity. Microtubules usually have 13 protofilaments but different protofilament numbers can be found in some organisms and specialized cells. The cofactor is Mg(2+). In terms of processing, undergoes a tyrosination/detyrosination cycle, the cyclic removal and re-addition of a C-terminal tyrosine residue by the enzymes tubulin tyrosine carboxypeptidase (TTCP) and tubulin tyrosine ligase (TTL), respectively. Post-translationally, acetylation of alpha chains at Lys-40 stabilizes microtubules and affects affinity and processivity of microtubule motors. This modification has a role in multiple cellular functions, ranging from cell motility, cell cycle progression or cell differentiation to intracellular trafficking and signaling.

Its subcellular location is the cytoplasm. It is found in the cytoskeleton. The enzyme catalyses GTP + H2O = GDP + phosphate + H(+). In terms of biological role, tubulin is the major constituent of microtubules, a cylinder consisting of laterally associated linear protofilaments composed of alpha- and beta-tubulin heterodimers. Microtubules grow by the addition of GTP-tubulin dimers to the microtubule end, where a stabilizing cap forms. Below the cap, tubulin dimers are in GDP-bound state, owing to GTPase activity of alpha-tubulin. This Haemonchus contortus (Barber pole worm) protein is Tubulin alpha chain.